We begin with the raw amino-acid sequence, 367 residues long: Bi-functional coumaroyl CoA and feruloyl CoA ortho-hydroxylase Diox4 (367 aa).

The 111-residue stretch at Ile207–Pro317 folds into the Fe2OG dioxygenase domain. 2-oxoglutarate is bound at residue Tyr223. The Fe cation site is built by His238, Asp240, and His298. 2-oxoglutarate is bound by residues Arg308 and Ser310.

This sequence belongs to the iron/ascorbate-dependent oxidoreductase family. The cofactor is L-ascorbate. Fe(2+) is required as a cofactor.

It carries out the reaction (E)-4-coumaroyl-CoA + 2-oxoglutarate + O2 = (E)-2,4-dihydroxycinnamoyl-CoA + succinate + CO2. It catalyses the reaction (E)-feruloyl-CoA + 2-oxoglutarate + O2 = (E)-6-hydroxyferuloyl-CoA + succinate + CO2. It functions in the pathway phenylpropanoid metabolism. Its activity is regulated as follows. Repressed by the competitive inhibitor psoralen, but not by umbelliferone, xanthotoxin, bergapten and isopimpinellin. Functionally, 2-oxoglutarate (OG)- and Fe(II)-dependent dioxygenase (2OGD) involved in scopoletin and umbelliferone biosynthesis. Converts feruloyl CoA into 6'-hydroxyferuloyl CoA, and p-coumaroyl CoA into 2,4-dihydroxycinnamoyl-CoA. Has no activity with cinnamic acid, caffeic acid, p-coumaric acid, ferulic acid, cinnamoyl-CoA and caffeoyl-CoA. This chain is Bi-functional coumaroyl CoA and feruloyl CoA ortho-hydroxylase Diox4, found in Ruta graveolens (Common rue).